Reading from the N-terminus, the 458-residue chain is GTPase Der (458 aa).

2 EngA-type G domains span residues 3 to 167 and 176 to 351; these read PVVV…PETE and IKLA…AQYT. GTP-binding positions include 9 to 16, 56 to 60, 119 to 122, 182 to 189, 229 to 233, and 294 to 297; these read GRPNVGKS, DTGGF, NKID, DTAGL, and NKWD. The region spanning 352–436 is the KH-like domain; that stretch reads FNIKTGELNN…PIRLFFREKP (85 aa).

The protein belongs to the TRAFAC class TrmE-Era-EngA-EngB-Septin-like GTPase superfamily. EngA (Der) GTPase family. Associates with the 50S ribosomal subunit.

Its function is as follows. GTPase that plays an essential role in the late steps of ribosome biogenesis. The protein is GTPase Der of Desulfosudis oleivorans (strain DSM 6200 / JCM 39069 / Hxd3) (Desulfococcus oleovorans).